We begin with the raw amino-acid sequence, 107 residues long: Apolipoprotein E (107 aa).

Tandem repeats lie at residues Ala11–Ser32, Pro33–Gly54, Ala55–Gly76, Gln77–Leu98, and Arg99–Arg107. Positions Ala11 to Arg107 are 5 X 22 AA approximate tandem repeats. Methionine sulfoxide is present on Met74. Residue Ser78 is modified to Phosphoserine. Residues His89–Arg99 form an LDL and other lipoprotein receptors binding region. Leu93–Arg96 provides a ligand contact to heparin.

Belongs to the apolipoprotein A1/A4/E family. As to quaternary structure, homotetramer. May interact with ABCA1; functionally associated with ABCA1 in the biogenesis of HDLs. May interact with APP/A4 amyloid-beta peptide; the interaction is extremely stable in vitro but its physiological significance is unclear. May interact with MAPT. May interact with MAP2. In the cerebrospinal fluid, interacts with secreted SORL1. Interacts with PMEL; this allows the loading of PMEL luminal fragment on ILVs to induce fibril nucleation. Post-translationally, APOE exists as multiple glycosylated and sialylated glycoforms within cells and in plasma. The extent of glycosylation and sialylation are tissue and context specific. Glycated in plasma VLDL. In terms of processing, phosphorylated by FAM20C in the extracellular medium.

It is found in the secreted. The protein localises to the extracellular space. The protein resides in the extracellular matrix. Its subcellular location is the extracellular vesicle. It localises to the endosome. It is found in the multivesicular body. Its function is as follows. APOE is an apolipoprotein, a protein associating with lipid particles, that mainly functions in lipoprotein-mediated lipid transport between organs via the plasma and interstitial fluids. APOE is a core component of plasma lipoproteins and is involved in their production, conversion and clearance. Apolipoproteins are amphipathic molecules that interact both with lipids of the lipoprotein particle core and the aqueous environment of the plasma. As such, APOE associates with chylomicrons, chylomicron remnants, very low density lipoproteins (VLDL) and intermediate density lipoproteins (IDL) but shows a preferential binding to high-density lipoproteins (HDL). It also binds a wide range of cellular receptors including the LDL receptor/LDLR, the LDL receptor-related proteins LRP1, LRP2 and LRP8 and the very low-density lipoprotein receptor/VLDLR that mediate the cellular uptake of the APOE-containing lipoprotein particles. Finally, APOE also has a heparin-binding activity and binds heparan-sulfate proteoglycans on the surface of cells, a property that supports the capture and the receptor-mediated uptake of APOE-containing lipoproteins by cells. A main function of APOE is to mediate lipoprotein clearance through the uptake of chylomicrons, VLDLs, and HDLs by hepatocytes. APOE is also involved in the biosynthesis by the liver of VLDLs as well as their uptake by peripheral tissues ensuring the delivery of triglycerides and energy storage in muscle, heart and adipose tissues. By participating in the lipoprotein-mediated distribution of lipids among tissues, APOE plays a critical role in plasma and tissues lipid homeostasis. APOE is also involved in two steps of reverse cholesterol transport, the HDLs-mediated transport of cholesterol from peripheral tissues to the liver, and thereby plays an important role in cholesterol homeostasis. First, it is functionally associated with ABCA1 in the biogenesis of HDLs in tissues. Second, it is enriched in circulating HDLs and mediates their uptake by hepatocytes. APOE also plays an important role in lipid transport in the central nervous system, regulating neuron survival and sprouting. The polypeptide is Apolipoprotein E (APOE) (Saimiri sciureus (Common squirrel monkey)).